Consider the following 153-residue polypeptide: Transcriptional repressor NrdR (153 aa).

The segment at 3–34 (CPFCNNINTQVKDSRAIEDDILIRRRRICLVC) is a zinc-finger region. In terms of domain architecture, ATP-cone spans 49–139 (FMVIKKNGET…VYMNFKNIND (91 aa)).

The protein belongs to the NrdR family. Zn(2+) is required as a cofactor.

Negatively regulates transcription of bacterial ribonucleotide reductase nrd genes and operons by binding to NrdR-boxes. The protein is Transcriptional repressor NrdR of Ehrlichia canis (strain Jake).